We begin with the raw amino-acid sequence, 704 residues long: MDARHWPWFLVFATFLLVSGLPAPEKFVKDIDGGIDQDIFDINEDLGLDLFEGDIKLEASGRNSIIGDNYRWPHTIPYVLEDSLEMNAKGVILNAFERYRLKTCIDFKPWSGEENYISVFKGSGCWSSVGNIHAGKQELSIGTNCDRIATVQHEFLHALGFWHEQSRADRDDYITIVWDRILSGKEHNFNIYNDSVSDSLNVPYDYTSVMHYSKTAFQNGTESTIITKISDFEDVIGQRMDFSDYDLLKLNQLYSCTSSLSFMDSCDFELENICGMIQSSQDSADWQRLSQVLSGPENDHSNMGQCKDSGFFMHFNTSTGNGGVTAMLESRVLYPKRGFQCVEFYLYNSGSGNGQLNVYTREYTAGHQDGVLTLQREIRDIPTGSWQLYYVTLQVTEKFRVVFEGVGGPGASSGGLSIDDINLSETRCPHHIWHIQNFTQLLGGQTTVYSPPFYSSKGYAFQINLDLTSPTNVGLYFHLISGANDDQLQWPCPWQQATMTLLDQNPDIRQRMSNQRSITTDPKMTDDNGSYLWDRPSKVGVEAFFPNGTQFSRGRGYGTSVFITQERLKSREFLKGDDVYILLTVEDISHLNSTAAVPGPVPTTSTVHNACSEVECQNGGICTLQEGRAECKCPAGEDWWYMGKRCEKRGSTKDTIVIAVSSTVTVFAVMLIITLISVYCTRRKYRKKASAKTAAMNLENQHAF.

Residues 1–20 form the signal peptide; it reads MDARHWPWFLVFATFLLVSG. The propeptide occupies 21–64; it reads LPAPEKFVKDIDGGIDQDIFDINEDLGLDLFEGDIKLEASGRNS. Residues 21–654 are Extracellular-facing; it reads LPAPEKFVKD…RCEKRGSTKD (634 aa). One can recognise a Peptidase M12A domain in the interval 63–257; it reads NSIIGDNYRW…LKLNQLYSCT (195 aa). 3 disulfide bridges follow: Cys-104–Cys-256, Cys-125–Cys-145, and Cys-266–Cys-428. Zn(2+) is bound at residue His-153. Glu-154 is a catalytic residue. Residues His-157 and His-163 each contribute to the Zn(2+) site. Asn-193, Asn-219, Asn-316, Asn-422, Asn-437, Asn-528, Asn-547, and Asn-592 each carry an N-linked (GlcNAc...) asparagine glycan. The MAM domain occupies 261–430; sequence SFMDSCDFEL…INLSETRCPH (170 aa). The MATH domain maps to 431–585; sequence HIWHIQNFTQ…GDDVYILLTV (155 aa). The EGF-like domain maps to 607–647; that stretch reads VHNACSEVECQNGGICTLQEGRAECKCPAGEDWWYMGKRCE. 3 disulfides stabilise this stretch: Cys-611/Cys-622, Cys-616/Cys-631, and Cys-633/Cys-646. The chain crosses the membrane as a helical span at residues 655-678; the sequence is TIVIAVSSTVTVFAVMLIITLISV. At 679–704 the chain is on the cytoplasmic side; that stretch reads YCTRRKYRKKASAKTAAMNLENQHAF. Thr-693 bears the Phosphothreonine mark.

Homotetramer consisting of disulfide-linked beta subunits, or heterotetramer of two alpha and two beta subunits formed by non-covalent association of two disulfide-linked heterodimers. Interacts with MBL2 through its carbohydrate moiety. This interaction may inhibit its catalytic activity. Interacts with TSPAN8. Zn(2+) is required as a cofactor. N-glycosylated; contains high mannose and/or complex biantennary structures. In terms of processing, proteolytically activated by trypsin in the intestinal lumen and kallikrein-related peptidases in other tissues. Post-translationally, phosphorylated by PKC at multiple sites of its cytoplasmic part. Phosphorylation dcreases activity at the cell surface, leading to diminished substrate cleavage. Kidney, intestinal brush borders and salivary ducts.

It localises to the cell membrane. It is found in the secreted. It catalyses the reaction Hydrolysis of proteins, including azocasein, and peptides. Hydrolysis of 5-His-|-Leu-6, 6-Leu-|-Cys-7, 14-Ala-|-Leu-15 and 19-Cys-|-Gly-20 bonds in insulin B chain.. Its activity is regulated as follows. Strongly inhibited by fetuin-A/AHSG. Membrane metallopeptidase that sheds many membrane-bound proteins. Exhibits a strong preference for acidic amino acids at the P1' position. Known substrates include: FGF19, VGFA, IL1B, IL18, procollagen I and III, E-cadherin, KLK7, gastrin, ADAM10, tenascin-C. The presence of several pro-inflammatory cytokine among substrates implicate MEP1B in inflammation. It is also involved in tissue remodeling due to its capability to degrade extracellular matrix components. The protein is Meprin A subunit beta (Mep1b) of Rattus norvegicus (Rat).